We begin with the raw amino-acid sequence, 88 residues long: UPF0335 protein NGR_c28390 (88 aa).

It belongs to the UPF0335 family.

The polypeptide is UPF0335 protein NGR_c28390 (Sinorhizobium fredii (strain NBRC 101917 / NGR234)).